An 840-amino-acid polypeptide reads, in one-letter code: Leucine--tRNA ligase (840 aa).

Positions 44–55 (PYPSANGLHVGH) match the 'HIGH' region motif. Residues 617-621 (KMSKS) carry the 'KMSKS' region motif. K620 provides a ligand contact to ATP.

The protein belongs to the class-I aminoacyl-tRNA synthetase family.

It is found in the cytoplasm. The catalysed reaction is tRNA(Leu) + L-leucine + ATP = L-leucyl-tRNA(Leu) + AMP + diphosphate. This is Leucine--tRNA ligase from Borreliella afzelii (strain PKo) (Borrelia afzelii).